The sequence spans 340 residues: Undecaprenyl-phosphate 4-deoxy-4-formamido-L-arabinose transferase (340 aa).

The next 2 helical transmembrane spans lie at 235 to 255 and 269 to 289; these read LSIV…ALIF and LFVL…GMGL.

The protein belongs to the glycosyltransferase 2 family.

It is found in the cell inner membrane. It catalyses the reaction UDP-4-deoxy-4-formamido-beta-L-arabinose + di-trans,octa-cis-undecaprenyl phosphate = 4-deoxy-4-formamido-alpha-L-arabinopyranosyl di-trans,octa-cis-undecaprenyl phosphate + UDP. It functions in the pathway glycolipid biosynthesis; 4-amino-4-deoxy-alpha-L-arabinose undecaprenyl phosphate biosynthesis; 4-amino-4-deoxy-alpha-L-arabinose undecaprenyl phosphate from UDP-4-deoxy-4-formamido-beta-L-arabinose and undecaprenyl phosphate: step 1/2. It participates in bacterial outer membrane biogenesis; lipopolysaccharide biosynthesis. Catalyzes the transfer of 4-deoxy-4-formamido-L-arabinose from UDP to undecaprenyl phosphate. The modified arabinose is attached to lipid A and is required for resistance to polymyxin and cationic antimicrobial peptides. The sequence is that of Undecaprenyl-phosphate 4-deoxy-4-formamido-L-arabinose transferase from Pseudomonas fluorescens (strain Pf0-1).